The primary structure comprises 1274 residues: Protein ECM30 (1274 aa).

Disordered stretches follow at residues Glu-23–Val-42, Arg-405–Pro-439, and Ser-494–Asn-517. 3 stretches are compositionally biased toward low complexity: residues Ala-27–Val-42, Ser-409–His-432, and Ser-494–Thr-515. A Phosphoserine modification is found at Ser-635. Positions Asn-803–Asn-822 are enriched in low complexity. The segment at Asn-803 to Ser-842 is disordered. Position 1065 is a phosphoserine (Ser-1065). A disordered region spans residues His-1100–Ser-1149. Over residues Ile-1110–Arg-1125 the composition is skewed to polar residues. The span at Thr-1135–Ser-1149 shows a compositional bias: low complexity.

The protein localises to the cytoplasm. Seems to be involved in cell wall organization and biogenesis. In Saccharomyces cerevisiae (strain ATCC 204508 / S288c) (Baker's yeast), this protein is Protein ECM30 (ECM30).